Reading from the N-terminus, the 244-residue chain is tRNA (guanine-N(1)-)-methyltransferase (244 aa).

Residues Gly112 and 132 to 137 (IGDYIL) contribute to the S-adenosyl-L-methionine site.

The protein belongs to the RNA methyltransferase TrmD family. Homodimer.

The protein localises to the cytoplasm. It catalyses the reaction guanosine(37) in tRNA + S-adenosyl-L-methionine = N(1)-methylguanosine(37) in tRNA + S-adenosyl-L-homocysteine + H(+). Its function is as follows. Specifically methylates guanosine-37 in various tRNAs. This is tRNA (guanine-N(1)-)-methyltransferase from Geobacillus kaustophilus (strain HTA426).